A 439-amino-acid chain; its full sequence is Thymidine phosphorylase (439 aa).

The protein belongs to the thymidine/pyrimidine-nucleoside phosphorylase family. Homodimer.

It catalyses the reaction thymidine + phosphate = 2-deoxy-alpha-D-ribose 1-phosphate + thymine. It functions in the pathway pyrimidine metabolism; dTMP biosynthesis via salvage pathway; dTMP from thymine: step 1/2. In terms of biological role, the enzymes which catalyze the reversible phosphorolysis of pyrimidine nucleosides are involved in the degradation of these compounds and in their utilization as carbon and energy sources, or in the rescue of pyrimidine bases for nucleotide synthesis. The chain is Thymidine phosphorylase from Mesorhizobium japonicum (strain LMG 29417 / CECT 9101 / MAFF 303099) (Mesorhizobium loti (strain MAFF 303099)).